The primary structure comprises 78 residues: Antitoxin VapB1 (78 aa).

One can recognise a SpoVT-AbrB domain in the interval 3–44; the sequence is TKVFQSGNSQAVRIPMDFRFDVDTVEIFRKENGDVVLRPVSK.

Belongs to the VapB family. As to quaternary structure, forms multimers, as well forming as a complex with VapC1.

Functionally, antitoxin component of a type II toxin-antitoxin (TA) system. Upon expression in E.coli neutralizes the effect of toxin VapC1. In vitro inhibits the RNase activity of VapC1. This Haemophilus influenzae (strain R2866) protein is Antitoxin VapB1 (vapB1).